Reading from the N-terminus, the 454-residue chain is UDP-N-acetylmuramate--L-alanine ligase (454 aa).

112-118 (GTHGKTT) contacts ATP.

It belongs to the MurCDEF family.

The protein localises to the cytoplasm. It carries out the reaction UDP-N-acetyl-alpha-D-muramate + L-alanine + ATP = UDP-N-acetyl-alpha-D-muramoyl-L-alanine + ADP + phosphate + H(+). It functions in the pathway cell wall biogenesis; peptidoglycan biosynthesis. Functionally, cell wall formation. This is UDP-N-acetylmuramate--L-alanine ligase from Oleidesulfovibrio alaskensis (strain ATCC BAA-1058 / DSM 17464 / G20) (Desulfovibrio alaskensis).